The primary structure comprises 715 residues: 1,4-alpha-glucan branching enzyme GlgB (715 aa).

Asp-396 (nucleophile) is an active-site residue. The Proton donor role is filled by Glu-449.

Belongs to the glycosyl hydrolase 13 family. GlgB subfamily. In terms of assembly, monomer.

The enzyme catalyses Transfers a segment of a (1-&gt;4)-alpha-D-glucan chain to a primary hydroxy group in a similar glucan chain.. The protein operates within glycan biosynthesis; glycogen biosynthesis. Catalyzes the formation of the alpha-1,6-glucosidic linkages in glycogen by scission of a 1,4-alpha-linked oligosaccharide from growing alpha-1,4-glucan chains and the subsequent attachment of the oligosaccharide to the alpha-1,6 position. The polypeptide is 1,4-alpha-glucan branching enzyme GlgB (Aliivibrio fischeri (strain ATCC 700601 / ES114) (Vibrio fischeri)).